A 101-amino-acid polypeptide reads, in one-letter code: uncharacterized protein (101 aa).

Residues 17–37 (VIKILLISGISRIIILILAMF) form a helical membrane-spanning segment.

The protein resides in the endoplasmic reticulum membrane. This is an uncharacterized protein from Schizosaccharomyces pombe (strain 972 / ATCC 24843) (Fission yeast).